Reading from the N-terminus, the 184-residue chain is Adenine phosphoribosyltransferase 2 (184 aa).

This sequence belongs to the purine/pyrimidine phosphoribosyltransferase family. In terms of assembly, homodimer.

Its subcellular location is the cytoplasm. It carries out the reaction AMP + diphosphate = 5-phospho-alpha-D-ribose 1-diphosphate + adenine. It participates in purine metabolism; AMP biosynthesis via salvage pathway; AMP from adenine: step 1/1. Catalyzes a salvage reaction resulting in the formation of AMP, that is energically less costly than de novo synthesis. The protein is Adenine phosphoribosyltransferase 2 of Rhizobium etli (strain ATCC 51251 / DSM 11541 / JCM 21823 / NBRC 15573 / CFN 42).